The chain runs to 71 residues: Transcription modulator YdgT (71 aa).

This sequence belongs to the Hha/YmoA/Cnu family. In terms of assembly, forms complexes with both H-NS and StpA.

Functionally, binds to H-NS and modified the range of genes it silences; H-NS alonge silences core gene while the H-NS-Hha complex (and presumably also H-NS-YdgT) silences genes acquired by horizontal gene transfer. Plays a role silencing virulence factors in the absence of factors that induce pathogenicity. The complex formed with H-NS binds to the specific 26-bp cnb site in the origin of replication oriC. In Salmonella choleraesuis (strain SC-B67), this protein is Transcription modulator YdgT (ydgT).